The sequence spans 754 residues: Ribosomal RNA large subunit methyltransferase K/L (754 aa).

A THUMP domain is found at 46–157 (TAYRLCLWSR…RGEAILSLDL (112 aa)).

The protein belongs to the methyltransferase superfamily. RlmKL family.

It is found in the cytoplasm. The catalysed reaction is guanosine(2445) in 23S rRNA + S-adenosyl-L-methionine = N(2)-methylguanosine(2445) in 23S rRNA + S-adenosyl-L-homocysteine + H(+). It catalyses the reaction guanosine(2069) in 23S rRNA + S-adenosyl-L-methionine = N(2)-methylguanosine(2069) in 23S rRNA + S-adenosyl-L-homocysteine + H(+). Functionally, specifically methylates the guanine in position 2445 (m2G2445) and the guanine in position 2069 (m7G2069) of 23S rRNA. This is Ribosomal RNA large subunit methyltransferase K/L from Pseudomonas fluorescens (strain ATCC BAA-477 / NRRL B-23932 / Pf-5).